Here is a 157-residue protein sequence, read N- to C-terminus: Protein MG115 (157 aa).

It belongs to the CinA family.

This is Protein MG115 from Mycoplasma genitalium (strain ATCC 33530 / DSM 19775 / NCTC 10195 / G37) (Mycoplasmoides genitalium).